The sequence spans 159 residues: SsrA-binding protein (159 aa).

This sequence belongs to the SmpB family.

The protein localises to the cytoplasm. In terms of biological role, required for rescue of stalled ribosomes mediated by trans-translation. Binds to transfer-messenger RNA (tmRNA), required for stable association of tmRNA with ribosomes. tmRNA and SmpB together mimic tRNA shape, replacing the anticodon stem-loop with SmpB. tmRNA is encoded by the ssrA gene; the 2 termini fold to resemble tRNA(Ala) and it encodes a 'tag peptide', a short internal open reading frame. During trans-translation Ala-aminoacylated tmRNA acts like a tRNA, entering the A-site of stalled ribosomes, displacing the stalled mRNA. The ribosome then switches to translate the ORF on the tmRNA; the nascent peptide is terminated with the 'tag peptide' encoded by the tmRNA and targeted for degradation. The ribosome is freed to recommence translation, which seems to be the essential function of trans-translation. The sequence is that of SsrA-binding protein from Coxiella burnetii (strain RSA 493 / Nine Mile phase I).